Consider the following 363-residue polypeptide: UDP-N-acetylglucosamine--N-acetylmuramyl-(pentapeptide) pyrophosphoryl-undecaprenol N-acetylglucosamine transferase (363 aa).

UDP-N-acetyl-alpha-D-glucosamine contacts are provided by residues 16–18 (TGG), Asn-128, Arg-167, Ser-195, Ile-249, 268–273 (ALTVSE), and Gln-294.

The protein belongs to the glycosyltransferase 28 family. MurG subfamily.

It is found in the cell inner membrane. It catalyses the reaction di-trans,octa-cis-undecaprenyl diphospho-N-acetyl-alpha-D-muramoyl-L-alanyl-D-glutamyl-meso-2,6-diaminopimeloyl-D-alanyl-D-alanine + UDP-N-acetyl-alpha-D-glucosamine = di-trans,octa-cis-undecaprenyl diphospho-[N-acetyl-alpha-D-glucosaminyl-(1-&gt;4)]-N-acetyl-alpha-D-muramoyl-L-alanyl-D-glutamyl-meso-2,6-diaminopimeloyl-D-alanyl-D-alanine + UDP + H(+). It participates in cell wall biogenesis; peptidoglycan biosynthesis. Functionally, cell wall formation. Catalyzes the transfer of a GlcNAc subunit on undecaprenyl-pyrophosphoryl-MurNAc-pentapeptide (lipid intermediate I) to form undecaprenyl-pyrophosphoryl-MurNAc-(pentapeptide)GlcNAc (lipid intermediate II). The polypeptide is UDP-N-acetylglucosamine--N-acetylmuramyl-(pentapeptide) pyrophosphoryl-undecaprenol N-acetylglucosamine transferase (Marinobacter nauticus (strain ATCC 700491 / DSM 11845 / VT8) (Marinobacter aquaeolei)).